Reading from the N-terminus, the 554-residue chain is Chaperonin GroEL (554 aa).

ATP-binding positions include 29–32, Lys50, 86–90, Gly418, and Asp499; these read TLGP and DGTTT. The segment at 528 to 554 is disordered; it reads HEEDNNTNRSGGGVGGGHHGGMGGMDF. Over residues 537–554 the composition is skewed to gly residues; sequence SGGGVGGGHHGGMGGMDF.

It belongs to the chaperonin (HSP60) family. In terms of assembly, forms a cylinder of 14 subunits composed of two heptameric rings stacked back-to-back. Interacts with the co-chaperonin GroES.

It localises to the cytoplasm. It catalyses the reaction ATP + H2O + a folded polypeptide = ADP + phosphate + an unfolded polypeptide.. In terms of biological role, together with its co-chaperonin GroES, plays an essential role in assisting protein folding. The GroEL-GroES system forms a nano-cage that allows encapsulation of the non-native substrate proteins and provides a physical environment optimized to promote and accelerate protein folding. The sequence is that of Chaperonin GroEL from Orientia tsutsugamushi (strain Boryong) (Rickettsia tsutsugamushi).